A 562-amino-acid polypeptide reads, in one-letter code: SLAIN motif-containing protein-like (562 aa).

3 disordered regions span residues 292–313 (QDYA…LHSL), 344–381 (HRYS…IQNH), and 409–562 (SLEA…DGCY). 2 stretches are compositionally biased toward low complexity: residues 295–311 (ASSS…ASLH) and 345–355 (RYSPSPLSSPR). Polar residues-rich tracts occupy residues 356–370 (CQSP…TTSR), 424–442 (QGPS…STPP), 465–531 (VSTS…STVP), and 539–553 (SRRS…STLG).

This sequence belongs to the SLAIN motif-containing family.

This chain is SLAIN motif-containing protein-like, found in Xenopus laevis (African clawed frog).